A 335-amino-acid polypeptide reads, in one-letter code: UPF0353 protein MUL_1490 (335 aa).

The next 2 membrane-spanning stretches (helical) occupy residues 18-38 (WFFL…VLQL) and 67-87 (IPAM…AGPT). Positions 98-298 (VVMLVIDVSQ…SVYVSLQQQI (201 aa)) constitute a VWFA domain. The chain crosses the membrane as a helical span at residues 309–329 (MGWLRLGALVLVAAALAALLI).

This sequence belongs to the UPF0353 family.

The protein resides in the cell membrane. The sequence is that of UPF0353 protein MUL_1490 from Mycobacterium ulcerans (strain Agy99).